The primary structure comprises 363 residues: GDP-fucose transporter 1 (363 aa).

A run of 8 helical transmembrane segments spans residues 33 to 55 (FLLR…ISMV), 75 to 97 (VTFY…ATCC), 110 to 129 (LKVA…MITF), 139 to 161 (VPFY…YLLL), 166 to 184 (SFYA…WLGI), 194 to 213 (SLTG…LNAI), 226 to 248 (IWRL…MIVL), and 263 to 285 (AHFW…VTGL).

The protein belongs to the TPT transporter family. SLC35C subfamily.

It is found in the golgi apparatus membrane. It carries out the reaction GMP(out) + GDP-beta-L-fucose(in) = GMP(in) + GDP-beta-L-fucose(out). Functionally, antiporter specific for GDP-l-fucose and depending on the concomitant reverse transport of GMP. Involved in GDP-fucose import from the cytoplasm into the Golgi lumen. This chain is GDP-fucose transporter 1 (Slc35c1), found in Mus musculus (Mouse).